A 130-amino-acid polypeptide reads, in one-letter code: Single-stranded DNA-binding protein 1 (130 aa).

The region spanning 1 to 104 (MINNVVLIGR…VVAESFQILE (104 aa)) is the SSB domain. The disordered stretch occupies residues 108–130 (NTANTSSLADSMPDYGPEPDLPF).

In terms of assembly, homotetramer.

The sequence is that of Single-stranded DNA-binding protein 1 (ssb1) from Streptococcus pyogenes serotype M18 (strain MGAS8232).